The primary structure comprises 446 residues: Adenylosuccinate synthetase (446 aa).

GTP contacts are provided by residues 12–18 and 40–42; these read GDEGKGK and GHT. Catalysis depends on Asp13, which acts as the Proton acceptor. The Mg(2+) site is built by Asp13 and Gly40. IMP is bound by residues 13–16, 38–41, Thr128, Arg142, Gln223, Thr238, and Arg302; these read DEGK and NAGH. The active-site Proton donor is His41. Position 298 to 304 (298 to 304) interacts with substrate; sequence TTTGRRR. GTP-binding positions include Arg304, 330 to 332, and 412 to 414; these read KLD and SLG.

Belongs to the adenylosuccinate synthetase family. Homodimer. Mg(2+) is required as a cofactor.

The protein resides in the cytoplasm. It catalyses the reaction IMP + L-aspartate + GTP = N(6)-(1,2-dicarboxyethyl)-AMP + GDP + phosphate + 2 H(+). Its pathway is purine metabolism; AMP biosynthesis via de novo pathway; AMP from IMP: step 1/2. In terms of biological role, plays an important role in the de novo pathway of purine nucleotide biosynthesis. Catalyzes the first committed step in the biosynthesis of AMP from IMP. This chain is Adenylosuccinate synthetase, found in Acaryochloris marina (strain MBIC 11017).